A 208-amino-acid polypeptide reads, in one-letter code: Ribosomal RNA small subunit methyltransferase G (208 aa).

S-adenosyl-L-methionine contacts are provided by residues Gly-76, Leu-81, 127–128, and Arg-142; that span reads VE.

Belongs to the methyltransferase superfamily. RNA methyltransferase RsmG family.

It is found in the cytoplasm. The catalysed reaction is guanosine(527) in 16S rRNA + S-adenosyl-L-methionine = N(7)-methylguanosine(527) in 16S rRNA + S-adenosyl-L-homocysteine. Its function is as follows. Specifically methylates the N7 position of guanine in position 527 of 16S rRNA. The polypeptide is Ribosomal RNA small subunit methyltransferase G (Legionella pneumophila subsp. pneumophila (strain Philadelphia 1 / ATCC 33152 / DSM 7513)).